The chain runs to 277 residues: Large ribosomal subunit protein uL2 (277 aa).

2 disordered regions span residues 36–58 (PLHK…GGGH) and 219–277 (TVRG…RKNK). Basic residues predominate over residues 258-277 (KTRKKKNKSDKFIVRRRKNK).

It belongs to the universal ribosomal protein uL2 family. Part of the 50S ribosomal subunit. Forms a bridge to the 30S subunit in the 70S ribosome.

In terms of biological role, one of the primary rRNA binding proteins. Required for association of the 30S and 50S subunits to form the 70S ribosome, for tRNA binding and peptide bond formation. It has been suggested to have peptidyltransferase activity; this is somewhat controversial. Makes several contacts with the 16S rRNA in the 70S ribosome. The polypeptide is Large ribosomal subunit protein uL2 (Bacillus velezensis (strain DSM 23117 / BGSC 10A6 / LMG 26770 / FZB42) (Bacillus amyloliquefaciens subsp. plantarum)).